A 410-amino-acid polypeptide reads, in one-letter code: F-box protein At3g61340 (410 aa).

Residues Glu17–Ile66 form the F-box domain.

This chain is F-box protein At3g61340, found in Arabidopsis thaliana (Mouse-ear cress).